Consider the following 427-residue polypeptide: 3-isopropylmalate dehydratase large subunit (427 aa).

Residues Cys-308, Cys-368, and Cys-371 each coordinate [4Fe-4S] cluster.

Belongs to the aconitase/IPM isomerase family. LeuC type 2 subfamily. As to quaternary structure, heterodimer of LeuC and LeuD. It depends on [4Fe-4S] cluster as a cofactor.

The enzyme catalyses (2R,3S)-3-isopropylmalate = (2S)-2-isopropylmalate. Its pathway is amino-acid biosynthesis; L-leucine biosynthesis; L-leucine from 3-methyl-2-oxobutanoate: step 2/4. Its function is as follows. Catalyzes the isomerization between 2-isopropylmalate and 3-isopropylmalate, via the formation of 2-isopropylmaleate. This is 3-isopropylmalate dehydratase large subunit from Citrifermentans bemidjiense (strain ATCC BAA-1014 / DSM 16622 / JCM 12645 / Bem) (Geobacter bemidjiensis).